Reading from the N-terminus, the 83-residue chain is Mitochondrial import inner membrane translocase subunit Tim8 B (83 aa).

A2 is modified (N-acetylalanine). Residues C36 to C59 carry the Twin CX3C motif motif. 2 cysteine pairs are disulfide-bonded: C36–C59 and C40–C55.

This sequence belongs to the small Tim family. As to quaternary structure, heterohexamer; possibly composed of 3 copies of TIMM8B and 3 copies of TIMM13, named soluble 70 kDa complex. Associates with the TIM22 complex, whose core is composed of TIMM22. Ubiquitous, with highest expression in heart, kidney, liver and skeletal muscle.

It is found in the mitochondrion inner membrane. In terms of biological role, probable mitochondrial intermembrane chaperone that participates in the import and insertion of some multi-pass transmembrane proteins into the mitochondrial inner membrane. Also required for the transfer of beta-barrel precursors from the TOM complex to the sorting and assembly machinery (SAM complex) of the outer membrane. Acts as a chaperone-like protein that protects the hydrophobic precursors from aggregation and guide them through the mitochondrial intermembrane space. The chain is Mitochondrial import inner membrane translocase subunit Tim8 B (TIMM8B) from Homo sapiens (Human).